Reading from the N-terminus, the 154-residue chain is Deoxyuridine 5'-triphosphate nucleotidohydrolase (154 aa).

Residues 70–72 (RSG), N83, 87–89 (LID), and M97 contribute to the substrate site.

This sequence belongs to the dUTPase family. It depends on Mg(2+) as a cofactor.

It catalyses the reaction dUTP + H2O = dUMP + diphosphate + H(+). It functions in the pathway pyrimidine metabolism; dUMP biosynthesis; dUMP from dCTP (dUTP route): step 2/2. Its function is as follows. This enzyme is involved in nucleotide metabolism: it produces dUMP, the immediate precursor of thymidine nucleotides and it decreases the intracellular concentration of dUTP so that uracil cannot be incorporated into DNA. This is Deoxyuridine 5'-triphosphate nucleotidohydrolase from Buchnera aphidicola subsp. Acyrthosiphon pisum (strain 5A).